We begin with the raw amino-acid sequence, 224 residues long: MSEDLYEDDLDTQGSSGPRHPMAERFRGYLPVVVDVETGGFNSATDALLEIAAVTIGMDEKGFLFPEHTYFHRVEPFEGANIEPAALEFTGIKLDHPLRMAVSEESAMTDIFRGVRKALKANGCKRAILVGHNSSFDLGFLNAAVARNDLKRNPFHPFSSFDTATLAGLAYGQTVLARACQSADIDFDGREAHSARYDTEKTAELFCGIVNRWKEMGGWRDFND.

Residues 1-11 (MSEDLYEDDLD) are compositionally biased toward acidic residues. Positions 1 to 22 (MSEDLYEDDLDTQGSSGPRHPM) are disordered. Residues 32-206 (VVVDVETGGF…YDTEKTAELF (175 aa)) form the Exonuclease domain. Mg(2+) contacts are provided by aspartate 35, glutamate 37, histidine 193, and aspartate 198. The active-site Proton donor/acceptor is the histidine 193.

This sequence belongs to the RNase T family. In terms of assembly, homodimer. Mg(2+) is required as a cofactor.

Functionally, trims short 3' overhangs of a variety of RNA species, leaving a one or two nucleotide 3' overhang. Responsible for the end-turnover of tRNA: specifically removes the terminal AMP residue from uncharged tRNA (tRNA-C-C-A). Also appears to be involved in tRNA biosynthesis. This is Ribonuclease T from Pseudomonas putida (strain ATCC 700007 / DSM 6899 / JCM 31910 / BCRC 17059 / LMG 24140 / F1).